Reading from the N-terminus, the 58-residue chain is Galectin-1 (58 aa).

One can recognise a Galectin domain in the interval 2 to 58; that stretch reads GITXTSLHVAPGARLAVKGDIPAGAKSWVINLGKGENDIMLHFNARFDAHGDIRTIV. A beta-D-galactoside-binding positions include 43–47 and histidine 51; that span reads HFNAR.

As to quaternary structure, monomer. Detected in most tissues, most abundantly in skin.

It is found in the secreted. Its subcellular location is the extracellular space. The protein resides in the extracellular matrix. Functionally, may regulate cell apoptosis and cell differentiation. Binds beta-galactoside and a wide array of complex carbohydrates. The chain is Galectin-1 from Podarcis hispanicus (Iberian wall lizard).